The sequence spans 169 residues: Ribosomal RNA large subunit methyltransferase H (169 aa).

S-adenosyl-L-methionine is bound by residues leucine 85, glycine 117, and leucine 136–tryptophan 141.

It belongs to the RNA methyltransferase RlmH family. As to quaternary structure, homodimer.

It is found in the cytoplasm. It carries out the reaction pseudouridine(1915) in 23S rRNA + S-adenosyl-L-methionine = N(3)-methylpseudouridine(1915) in 23S rRNA + S-adenosyl-L-homocysteine + H(+). Its function is as follows. Specifically methylates the pseudouridine at position 1915 (m3Psi1915) in 23S rRNA. The sequence is that of Ribosomal RNA large subunit methyltransferase H from Brucella ovis (strain ATCC 25840 / 63/290 / NCTC 10512).